A 565-amino-acid polypeptide reads, in one-letter code: Frizzled-2 (565 aa).

The signal sequence occupies residues 1–23 (MRPRSALPRLLLPLLLLPAAGPA). The Extracellular portion of the chain corresponds to 24–247 (QFHGEKGISI…QEETRFARLW (224 aa)). The FZ domain maps to 34–153 (PDHGFCQPIS…HGAEQICVGQ (120 aa)). Cystine bridges form between Cys-39/Cys-100, Cys-47/Cys-93, Cys-84/Cys-121, Cys-110/Cys-150, and Cys-114/Cys-138. N-linked (GlcNAc...) asparagine glycosylation is present at Asn-53. The N-linked (GlcNAc...) asparagine glycan is linked to Asn-154. Residues 160 to 189 (APALLTTAPPPGLQPGAGGTPGGPGGGGAP) form a disordered region. Positions 174-188 (PGAGGTPGGPGGGGA) are enriched in gly residues. Residues 248 to 268 (ILTWSVLCCASTFFTVTTYLV) traverse the membrane as a helical segment. Residues 269 to 279 (DMQRFRYPERP) lie on the Cytoplasmic side of the membrane. A helical membrane pass occupies residues 280–300 (IIFLSGCYTMVSVAYIAGFVL). Over 301–327 (QERVVCNERFSEDGYRTVVQGTKKEGC) the chain is Extracellular. A helical membrane pass occupies residues 328-348 (TILFMMLYFFSMASSIWWVIL). The Cytoplasmic segment spans residues 349-370 (SLTWFLAAGMKWGHEAIEANSQ). Residues 371–391 (YFHLAAWAVPAVKTITILAMG) form a helical membrane-spanning segment. Residues 392 to 414 (QIDGDLLSGVCFVGLNSLDPLRG) lie on the Extracellular side of the membrane. The helical transmembrane segment at 415 to 435 (FVLAPLFVYLFIGTSFLLAGF) threads the bilayer. At 436-461 (VSLFRIRTIMKHDGTKTEKLERLMVR) the chain is on the cytoplasmic side. The chain crosses the membrane as a helical span at residues 462 to 482 (IGVFSVLYTVPATIVIACYFY). The Extracellular segment spans residues 483–519 (EQAFREHWERSWVSQHCKSLAIPCPAHYTPRMSPDFT). The helical transmembrane segment at 520-540 (VYMIKYLMTLIVGITSGFWIW) threads the bilayer. The Cytoplasmic portion of the chain corresponds to 541–565 (SGKTLHSWRKFYTRLTNSRHGETTV). Positions 543–548 (KTLHSW) match the Lys-Thr-X-X-X-Trp motif, mediates interaction with the PDZ domain of Dvl family members motif. The PDZ-binding motif lies at 563 to 565 (TTV).

The protein belongs to the G-protein coupled receptor Fz/Smo family. As to quaternary structure, (Microbial infection) Interacts with C.difficile toxin TcdB; frizzled receptors constitute the major host receptors for TcdB in the colonic epithelium. Post-translationally, ubiquitinated by ZNRF3, leading to its degradation by the proteasome. Widely expressed. In the adult, mainly found in heart, placenta, skeletal muscle, lung, kidney, pancreas, prostate, testis, ovary and colon. In the fetus, expressed in brain, lung and kidney. Low levels in fetal liver.

The protein resides in the membrane. The protein localises to the cell membrane. Functionally, receptor for Wnt proteins. Most of frizzled receptors are coupled to the beta-catenin canonical signaling pathway, which leads to the activation of disheveled proteins, inhibition of GSK-3 kinase, nuclear accumulation of beta-catenin and activation of Wnt target genes. A second signaling pathway involving PKC and calcium fluxes has been seen for some family members, but it is not yet clear if it represents a distinct pathway or if it can be integrated in the canonical pathway, as PKC seems to be required for Wnt-mediated inactivation of GSK-3 kinase. Both pathways seem to involve interactions with G-proteins. May be involved in transduction and intercellular transmission of polarity information during tissue morphogenesis and/or in differentiated tissues. Its function is as follows. (Microbial infection) Acts as a receptor for C.difficile toxin TcdB in the colonic epithelium. TcdB occupies the binding site for Wnt-adducted palmitoleate in frizzled receptors and TcdB-binding prevents Wnt-binding and downstream Wnt signaling. This is Frizzled-2 (FZD2) from Homo sapiens (Human).